The sequence spans 79 residues: Small ribosomal subunit protein bS18 (79 aa).

Belongs to the bacterial ribosomal protein bS18 family. Part of the 30S ribosomal subunit. Forms a tight heterodimer with protein bS6.

Functionally, binds as a heterodimer with protein bS6 to the central domain of the 16S rRNA, where it helps stabilize the platform of the 30S subunit. The chain is Small ribosomal subunit protein bS18 from Renibacterium salmoninarum (strain ATCC 33209 / DSM 20767 / JCM 11484 / NBRC 15589 / NCIMB 2235).